Reading from the N-terminus, the 265-residue chain is Aquaporin-5 (265 aa).

The Cytoplasmic segment spans residues 1 to 12 (MKKEVCSVAFLK). The chain crosses the membrane as a helical span at residues 13 to 33 (AVFAEFLATLIFVFFGLGSAL). The Extracellular segment spans residues 34–39 (KWPSAL). Residues 40 to 60 (PTILQIALAFGLAIGTLAQAL) form a helical membrane-spanning segment. The Cytoplasmic segment spans residues 61-65 (GPVSG). Positions 66–74 (GHINPAITL) form an intramembrane region, discontinuously helical. The NPA 1 signature appears at 69-71 (NPA). Residues 75-87 (ALLVGNQISLLRA) lie on the Cytoplasmic side of the membrane. Residues 88-108 (FFYVAAQLVGAIAGAGILYGV) traverse the membrane as a helical segment. At 109-126 (APLNARGNLAVNALNNNT) the chain is on the extracellular side. N-linked (GlcNAc...) asparagine glycans are attached at residues Asn124 and Asn125. A helical transmembrane segment spans residues 127-147 (TQGQAMVVELILTFQLALCIF). The Cytoplasmic portion of the chain corresponds to 148–158 (ASTDSRRTSPV). A helical transmembrane segment spans residues 159-179 (GSPALSIGLSVTLGHLVGIYF). A topological domain (extracellular) is located at residue Thr180. Residues 181–191 (GCSMNPARSFG) constitute an intramembrane region (discontinuously helical). Positions 185–187 (NPA) match the NPA 2 motif. The Extracellular portion of the chain corresponds to 192-203 (PAVVMNRFSPAH). Residues 204–224 (WVFWVGPIVGAVLAAILYFYL) form a helical membrane-spanning segment. Topologically, residues 225–265 (LFPNSLSLSERVAIIKGTYEPDEDWEEQREERKKTMELTTR) are cytoplasmic.

The protein belongs to the MIP/aquaporin (TC 1.A.8) family. In terms of assembly, homotetramer; each monomer provides an independent water pore. Interacts with TRPV4; the interaction is probably indirect and regulates TRPV4 activation by hypotonicity. Detected in skin eccrine sweat glands, at the apical cell membrane and at intercellular canaliculi (at protein level).

It is found in the apical cell membrane. The protein localises to the cell membrane. The protein resides in the cytoplasmic vesicle membrane. The catalysed reaction is H2O(in) = H2O(out). In terms of biological role, aquaporins form homotetrameric transmembrane channels, with each monomer independently mediating water transport across the plasma membrane along its osmotic gradient. Plays an important role in fluid secretion in salivary glands. Required for TRPV4 activation by hypotonicity. Together with TRPV4, controls regulatory volume decrease in salivary epithelial cells. Seems to play a redundant role in water transport in the eye, lung and in sweat glands. The sequence is that of Aquaporin-5 from Homo sapiens (Human).